A 429-amino-acid polypeptide reads, in one-letter code: TNF receptor-associated factor family protein DDB_G0267744 (429 aa).

The RING-type; degenerate zinc finger occupies 22–60; that stretch reads CVICSHLQVDIYQCVEGHFACKNCFLKMIELKKQCMTCR. 2 TRAF-type zinc fingers span residues 151 to 203 and 204 to 265; these read HHLK…GEFN and NHQD…SNSE.

The protein belongs to the TNF receptor-associated factor family.

Its subcellular location is the cytoplasm. In terms of biological role, probable adapter protein and signal transducer that links members of the tumor necrosis factor receptor family to different signaling pathways by association with the receptor cytoplasmic domain and kinases. The chain is TNF receptor-associated factor family protein DDB_G0267744 from Dictyostelium discoideum (Social amoeba).